A 232-amino-acid polypeptide reads, in one-letter code: Ion-translocating oxidoreductase complex subunit E (232 aa).

6 helical membrane passes run 18-38 (GLVQ…LTNA), 39-59 (IGLG…VSLV), 69-89 (IPVF…LINA), 93-113 (GLYL…VIIG), 127-147 (AAFD…LLGA), and 182-202 (NFLL…LIAI).

The protein belongs to the NqrDE/RnfAE family. In terms of assembly, the complex is composed of six subunits: RnfA, RnfB, RnfC, RnfD, RnfE and RnfG.

The protein localises to the cell inner membrane. In terms of biological role, part of a membrane-bound complex that couples electron transfer with translocation of ions across the membrane. The sequence is that of Ion-translocating oxidoreductase complex subunit E from Shewanella loihica (strain ATCC BAA-1088 / PV-4).